The chain runs to 289 residues: MYFLTPILVAILCILVVWIFKNADRSMEKKKGEPRTRAEARPWVDEDLKDSSDLHQAEEDADEWQESEENVEHIPFSHNHYPEKEMVKRSQEFYELLNKRRSVRFISNEQVPMEVIDNVIRTAGTAPSGAHTEPWTFVVVKDPDVKHKIRKIIEEEEEINYMKRMGHRWVTDLKKLRTNWIKEYLDTAPILILIFKQVHGFAANGKKKVHYYNEISVSIACGILLAALQNAGLVTVTTTPLNCGPRLRVLLGRPAHEKLLMLLPVGYPSKEATVPDLKRKPLDQIMVTV.

Residues 1–21 form a helical membrane-spanning segment; that stretch reads MYFLTPILVAILCILVVWIFK. Basic and acidic residues predominate over residues 29 to 58; it reads KKKGEPRTRAEARPWVDEDLKDSSDLHQAE. A disordered region spans residues 29 to 69; the sequence is KKKGEPRTRAEARPWVDEDLKDSSDLHQAEEDADEWQESEE. The segment covering 59-69 has biased composition (acidic residues); sequence EDADEWQESEE. FMN contacts are provided by residues 100 to 104, S128, and 128 to 129; these read RRSVR and SG. 4 residues coordinate 3-iodo-L-tyrosine: A130, E157, Y161, and K182. Residues 237–239 and R279 each bind FMN; that span reads TTT.

It belongs to the nitroreductase family. Homodimer. FMN serves as cofactor. In terms of tissue distribution, expressed at a high level in thyroid gland (at protein level). Expressed at a high level in thyroid gland and at lower level in kidney and trachea.

The protein resides in the cell membrane. It is found in the cytoplasmic vesicle membrane. The enzyme catalyses 2 iodide + L-tyrosine + 2 NADP(+) = 3,5-diiodo-L-tyrosine + 2 NADPH + H(+). The catalysed reaction is iodide + L-tyrosine + NADP(+) = 3-iodo-L-tyrosine + NADPH. It catalyses the reaction 3-iodo-L-tyrosine + iodide + NADP(+) = 3,5-diiodo-L-tyrosine + NADPH + H(+). It carries out the reaction L-tyrosine + chloride + NADP(+) = 3-chloro-L-tyrosine + NADPH. The enzyme catalyses bromide + L-tyrosine + NADP(+) = 3-bromo-L-tyrosine + NADPH. Functionally, catalyzes the dehalogenation of halotyrosines such as 3-bromo-L-tyrosine, 3-chloro-L-tyrosine, 3-iodo-L-tyrosine and 3,5-diiodo-L-tyrosine. During thyroid hormone biosynthesis, facilitates iodide salvage by catalysing the oxidative NADPH-dependent deiodination of the halogenated by-products of thyroid hormone production, monoiodotyrosine (L-MIT) and diiodotyrosine (L-DIT). The scavanged iodide can then reenter the hormone-producing pathways. Acts more efficiently on 3-iodo-L-tyrosine than 3,5-diiodo-L-tyrosine. The sequence is that of Iodotyrosine deiodinase 1 from Homo sapiens (Human).